A 506-amino-acid chain; its full sequence is COP9 signalosome complex subunit 2 (506 aa).

A PCI domain is found at Ser252–Asp420. Basic residues predominate over residues Ser482–Lys491. Residues Ser482–Phe506 are disordered. Residues Gly492–Phe506 are compositionally biased toward gly residues.

It belongs to the CSN2 family. As to quaternary structure, component of the COP9 signalosome (CSN) complex.

The protein localises to the cytoplasm. It is found in the nucleus. In terms of biological role, component of the COP9 signalosome (CSN) complex that acts as an regulator of the ubiquitin (Ubl) conjugation pathway by mediating the deneddylation of the cullin subunit of SCF-type E3 ubiquitin-protein ligase complexes. The CSN complex seems to link protein degradation to sexual development. Required for fruit body formation. This chain is COP9 signalosome complex subunit 2 (csnB), found in Emericella nidulans (strain FGSC A4 / ATCC 38163 / CBS 112.46 / NRRL 194 / M139) (Aspergillus nidulans).